Consider the following 262-residue polypeptide: Hydroxyethylthiazole kinase (262 aa).

Met-39 is a binding site for substrate. ATP contacts are provided by Lys-115 and Thr-160. Substrate is bound at residue Gly-187.

The protein belongs to the Thz kinase family. It depends on Mg(2+) as a cofactor.

It carries out the reaction 5-(2-hydroxyethyl)-4-methylthiazole + ATP = 4-methyl-5-(2-phosphooxyethyl)-thiazole + ADP + H(+). It functions in the pathway cofactor biosynthesis; thiamine diphosphate biosynthesis; 4-methyl-5-(2-phosphoethyl)-thiazole from 5-(2-hydroxyethyl)-4-methylthiazole: step 1/1. Its function is as follows. Catalyzes the phosphorylation of the hydroxyl group of 4-methyl-5-beta-hydroxyethylthiazole (THZ). This is Hydroxyethylthiazole kinase from Staphylococcus epidermidis (strain ATCC 35984 / DSM 28319 / BCRC 17069 / CCUG 31568 / BM 3577 / RP62A).